A 369-amino-acid polypeptide reads, in one-letter code: Cytoplasmic tRNA 2-thiolation protein 1 (369 aa).

It belongs to the TtcA family. CTU1/NCS6/ATPBD3 subfamily.

It is found in the cytoplasm. It participates in tRNA modification; 5-methoxycarbonylmethyl-2-thiouridine-tRNA biosynthesis. Its function is as follows. Plays a central role in 2-thiolation of mcm(5)S(2)U at tRNA wobble positions of tRNA(Lys), tRNA(Glu) and tRNA(Gln). Directly binds tRNAs and probably acts by catalyzing adenylation of tRNAs, an intermediate required for 2-thiolation. It is unclear whether it acts as a sulfurtransferase that transfers sulfur from thiocarboxylated URM1 onto the uridine of tRNAs at wobble position. Prior mcm(5) tRNA modification by the elongator complex is required for 2-thiolation. May also be involved in protein urmylation. This chain is Cytoplasmic tRNA 2-thiolation protein 1, found in Cryptococcus neoformans var. neoformans serotype D (strain JEC21 / ATCC MYA-565) (Filobasidiella neoformans).